The following is a 325-amino-acid chain: Probable transcription factor At4g01260 (325 aa).

A disordered region spans residues 1–98 (MAPKQLKKIE…SMGEEDVKKK (98 aa)). Low complexity-rich tracts occupy residues 23-32 (ASSGESATSG) and 49-69 (KPVVVSKPSGSKTTTKPESST). Residues 73–83 (RSFEKTDEMSK) are compositionally biased toward basic and acidic residues.

This sequence belongs to the GeBP family.

The sequence is that of Probable transcription factor At4g01260 from Arabidopsis thaliana (Mouse-ear cress).